Consider the following 297-residue polypeptide: UDP-N-acetylenolpyruvoylglucosamine reductase (297 aa).

In terms of domain architecture, FAD-binding PCMH-type spans 18–184 (QVGGPAEWYL…LSARLRLAPG (167 aa)). The active site involves R163. The active-site Proton donor is S214. Residue E285 is part of the active site.

FAD serves as cofactor.

The protein localises to the cytoplasm. The enzyme catalyses UDP-N-acetyl-alpha-D-muramate + NADP(+) = UDP-N-acetyl-3-O-(1-carboxyvinyl)-alpha-D-glucosamine + NADPH + H(+). It participates in cell wall biogenesis; peptidoglycan biosynthesis. In terms of biological role, cell wall formation. The chain is UDP-N-acetylenolpyruvoylglucosamine reductase from Gloeobacter violaceus (strain ATCC 29082 / PCC 7421).